We begin with the raw amino-acid sequence, 772 residues long: Protein U58 (772 aa).

Belongs to the herpesviridae UL87 family.

This chain is Protein U58 (U58), found in Human herpesvirus 6B (strain Z29) (HHV-6 variant B).